Here is a 401-residue protein sequence, read N- to C-terminus: Imidazolonepropionase (401 aa).

Residues His-70 and His-72 each contribute to the Fe(3+) site. The Zn(2+) site is built by His-70 and His-72. 4-imidazolone-5-propanoate is bound by residues Arg-79, Tyr-142, and His-175. Position 142 (Tyr-142) interacts with N-formimidoyl-L-glutamate. A Fe(3+)-binding site is contributed by His-238. Position 238 (His-238) interacts with Zn(2+). Gln-241 contributes to the 4-imidazolone-5-propanoate binding site. Residue Asp-313 coordinates Fe(3+). Asp-313 serves as a coordination point for Zn(2+). Asn-315 and Gly-317 together coordinate N-formimidoyl-L-glutamate. Thr-318 is a 4-imidazolone-5-propanoate binding site.

It belongs to the metallo-dependent hydrolases superfamily. HutI family. Zn(2+) serves as cofactor. Requires Fe(3+) as cofactor.

It localises to the cytoplasm. The catalysed reaction is 4-imidazolone-5-propanoate + H2O = N-formimidoyl-L-glutamate. It functions in the pathway amino-acid degradation; L-histidine degradation into L-glutamate; N-formimidoyl-L-glutamate from L-histidine: step 3/3. In terms of biological role, catalyzes the hydrolytic cleavage of the carbon-nitrogen bond in imidazolone-5-propanoate to yield N-formimidoyl-L-glutamate. It is the third step in the universal histidine degradation pathway. The sequence is that of Imidazolonepropionase from Xanthomonas campestris pv. campestris (strain 8004).